Consider the following 591-residue polypeptide: L-fucose isomerase (591 aa).

Residues glutamate 337 and aspartate 361 each act as proton acceptor in the active site. Mn(2+) contacts are provided by glutamate 337, aspartate 361, and histidine 528.

This sequence belongs to the L-fucose isomerase family. As to quaternary structure, homohexamer. Mn(2+) serves as cofactor.

The protein localises to the cytoplasm. It catalyses the reaction L-fucose = L-fuculose. It participates in carbohydrate degradation; L-fucose degradation; L-lactaldehyde and glycerone phosphate from L-fucose: step 1/3. Its function is as follows. Converts the aldose L-fucose into the corresponding ketose L-fuculose. The chain is L-fucose isomerase from Salmonella arizonae (strain ATCC BAA-731 / CDC346-86 / RSK2980).